A 211-amino-acid polypeptide reads, in one-letter code: ATP-dependent Clp protease proteolytic subunit (211 aa).

Ser107 functions as the Nucleophile in the catalytic mechanism. The active site involves His132.

Belongs to the peptidase S14 family. Fourteen ClpP subunits assemble into 2 heptameric rings which stack back to back to give a disk-like structure with a central cavity, resembling the structure of eukaryotic proteasomes.

Its subcellular location is the cytoplasm. The enzyme catalyses Hydrolysis of proteins to small peptides in the presence of ATP and magnesium. alpha-casein is the usual test substrate. In the absence of ATP, only oligopeptides shorter than five residues are hydrolyzed (such as succinyl-Leu-Tyr-|-NHMec, and Leu-Tyr-Leu-|-Tyr-Trp, in which cleavage of the -Tyr-|-Leu- and -Tyr-|-Trp bonds also occurs).. Functionally, cleaves peptides in various proteins in a process that requires ATP hydrolysis. Has a chymotrypsin-like activity. Plays a major role in the degradation of misfolded proteins. This Xanthobacter autotrophicus (strain ATCC BAA-1158 / Py2) protein is ATP-dependent Clp protease proteolytic subunit.